An 838-amino-acid polypeptide reads, in one-letter code: DNA gyrase subunit A (838 aa).

The Topo IIA-type catalytic domain maps to 41-510 (LPEVRDGLKP…ADGDVSDEDL (470 aa)). Tyr-129 acts as the O-(5'-phospho-DNA)-tyrosine intermediate in catalysis. Positions 537-543 (QKRGGKG) match the GyrA-box motif.

It belongs to the type II topoisomerase GyrA/ParC subunit family. In terms of assembly, heterotetramer, composed of two GyrA and two GyrB chains. In the heterotetramer, GyrA contains the active site tyrosine that forms a transient covalent intermediate with DNA, while GyrB binds cofactors and catalyzes ATP hydrolysis. Requires Mg(2+) as cofactor.

The protein localises to the cytoplasm. The enzyme catalyses ATP-dependent breakage, passage and rejoining of double-stranded DNA.. With respect to regulation, DNA supercoiling is inhibited by EDTA, novobiocin, coumermycin and ciprofloxacin. In terms of biological role, a type II topoisomerase that negatively supercoils closed circular double-stranded (ds) DNA in an ATP-dependent manner to modulate DNA topology and maintain chromosomes in an underwound state. Also catalyzes the interconversion of other topological isomers of double-stranded DNA rings, including catenanes and knotted rings. Relaxes negatively supercoiled DNA in an ATP-independent manner. A linear reaction intermediate can be trapped in the presence of the antibiotic ciprofloxacin. Negative supercoiling favors strand separation, and DNA replication, transcription, recombination and repair, all of which involve strand separation. Type II topoisomerases break and join 2 DNA strands simultaneously in an ATP-dependent manner. The polypeptide is DNA gyrase subunit A (Mycobacterium bovis (strain BCG / Pasteur 1173P2)).